Consider the following 36-residue polypeptide: Photosystem I reaction center subunit VIII (36 aa).

A helical transmembrane segment spans residues 6-28; that stretch reads LPSIFVPLVGLMFPAIAMASLSL.

It belongs to the PsaI family.

It is found in the plastid. It localises to the chloroplast thylakoid membrane. Functionally, may help in the organization of the PsaL subunit. The protein is Photosystem I reaction center subunit VIII of Calycanthus floridus var. glaucus (Eastern sweetshrub).